A 162-amino-acid chain; its full sequence is Allantoicase (162 aa).

It belongs to the allantoicase family. Homohexamer. In terms of tissue distribution, expressed in zygote.

It carries out the reaction allantoate + H2O = (S)-ureidoglycolate + urea. It functions in the pathway nitrogen metabolism; (S)-allantoin degradation; (S)-ureidoglycolate from allantoate (aminidohydrolase route): step 1/1. Its function is as follows. Catalyzes the degradation of allantoate to (-)-ureidoglycolate and (+)-ureidoglycolate to glyoxylate. The sequence is that of Allantoicase from Chlamydomonas reinhardtii (Chlamydomonas smithii).